Here is a 686-residue protein sequence, read N- to C-terminus: DNA ligase (686 aa).

NAD(+)-binding positions include 45-49 (DNEYD), 94-95 (SL), and glutamate 127. Lysine 129 serves as the catalytic N6-AMP-lysine intermediate. 4 residues coordinate NAD(+): arginine 150, glutamate 187, lysine 302, and lysine 326. Zn(2+)-binding residues include cysteine 420, cysteine 423, cysteine 438, and cysteine 444. Positions 605–686 (LDNLPLEGQT…DEFLKMIGAS (82 aa)) constitute a BRCT domain.

It belongs to the NAD-dependent DNA ligase family. LigA subfamily. Requires Mg(2+) as cofactor. The cofactor is Mn(2+).

The catalysed reaction is NAD(+) + (deoxyribonucleotide)n-3'-hydroxyl + 5'-phospho-(deoxyribonucleotide)m = (deoxyribonucleotide)n+m + AMP + beta-nicotinamide D-nucleotide.. DNA ligase that catalyzes the formation of phosphodiester linkages between 5'-phosphoryl and 3'-hydroxyl groups in double-stranded DNA using NAD as a coenzyme and as the energy source for the reaction. It is essential for DNA replication and repair of damaged DNA. This is DNA ligase from Psychrobacter sp. (strain PRwf-1).